The chain runs to 82 residues: Small ribosomal subunit protein uS17 (82 aa).

It belongs to the universal ribosomal protein uS17 family. In terms of assembly, part of the 30S ribosomal subunit.

One of the primary rRNA binding proteins, it binds specifically to the 5'-end of 16S ribosomal RNA. The sequence is that of Small ribosomal subunit protein uS17 from Bradyrhizobium sp. (strain BTAi1 / ATCC BAA-1182).